The primary structure comprises 89 residues: Cell division topological specificity factor (89 aa).

This sequence belongs to the MinE family.

In terms of biological role, prevents the cell division inhibition by proteins MinC and MinD at internal division sites while permitting inhibition at polar sites. This ensures cell division at the proper site by restricting the formation of a division septum at the midpoint of the long axis of the cell. The protein is Cell division topological specificity factor of Klebsiella pneumoniae subsp. pneumoniae (strain ATCC 700721 / MGH 78578).